The primary structure comprises 333 residues: (2R)-3-sulfolactate dehydrogenase (NADP(+)) (333 aa).

Belongs to the LDH2/MDH2 oxidoreductase family.

It catalyses the reaction (2R)-3-sulfolactate + NADP(+) = 3-sulfopyruvate + NADPH + H(+). Catalyzes the reduction of sulfopyruvate to (R)-sulfolactate. Together with SlcC, provides a racemase system that converts (2S)-3-sulfolactate to (2R)-3-sulfolactate, which is degraded further by (2R)-sulfolactate sulfo-lyase. The polypeptide is (2R)-3-sulfolactate dehydrogenase (NADP(+)) (comC) (Chromohalobacter salexigens (strain ATCC BAA-138 / DSM 3043 / CIP 106854 / NCIMB 13768 / 1H11)).